The primary structure comprises 156 residues: FVANRMAHELGHNLGIDNDRDSCSCGANSCIMSATVSNEPSSRFSDCSLNQYSSDLINYYGCLLNEPLRTDIVSPPFCGNYYPEVGEDCDCGPPANCQNPCCDAATCKLTTGSQCAEGLCCDQCKFIKARQICRKGRGDNPDDRCTGQSGDCPRNS.

Residues F1–P67 form the Peptidase M12B domain. H8 provides a ligand contact to Zn(2+). Residue E9 is part of the active site. Residue H12 coordinates Zn(2+). Intrachain disulfides connect C23/C47, C25/C30, C78/C97, C89/C107, C91/C102, C101/C124, C115/C121, C120/C145, and C133/C152. Positions P75–S156 constitute a Disintegrin domain. The segment covering G136–C145 has biased composition (basic and acidic residues). Residues G136–S156 form a disordered region. The Cell attachment site motif lies at R137–D139. Over residues T146–S156 the composition is skewed to polar residues.

It belongs to the venom metalloproteinase (M12B) family. P-II subfamily. P-IIb sub-subfamily. Monomer. Zn(2+) serves as cofactor. In terms of tissue distribution, expressed by the venom gland.

Its subcellular location is the secreted. Its function is as follows. Snake venom zinc metalloproteinase that inhibits ADP-induced platelet aggregation (probably by binding integrin alpha-IIb/beta-3 (ITGA2B/ITGB3)) and degrades fibrinogen. This Bothrops jararaca (Jararaca) protein is Zinc metalloproteinase-disintegrin jararin.